Here is a 530-residue protein sequence, read N- to C-terminus: Meiosis 1 arrest protein (530 aa).

The segment at 463–530 (LHPHWESRAP…SEWEKDPSRP (68 aa)) is disordered. Over residues 503 to 516 (ASKMPAASKSSSDA) the composition is skewed to low complexity.

It is found in the cytoplasm. Required for meiosis I progression during spermatogenesis. The polypeptide is Meiosis 1 arrest protein (M1AP) (Homo sapiens (Human)).